The following is a 479-amino-acid chain: Lincomycin resistance protein LmrB (479 aa).

14 consecutive transmembrane segments (helical) span residues 19–41 (MISL…IALT), 56–78 (WLTT…LLQW), 85–107 (FTVS…SFSF), 112–134 (RIVQ…LVIF), 141–160 (AAMG…GPTF), 170–192 (WHWI…IAYM), 205–222 (VLSI…VFGF), 232–251 (WSSP…LILF), 272–294 (MFIL…MLLL), 304–326 (LTAF…MSPV), 338–355 (WLVI…WFFS), 360–382 (TSTA…MIMM), 403–425 (IMNT…IMAA), and 449–471 (AGVQ…GAFF).

The protein belongs to the major facilitator superfamily. EmrB family.

It is found in the cell membrane. In terms of biological role, proton-dependent transporter. May mediate the efflux of lincomycin. The polypeptide is Lincomycin resistance protein LmrB (lmrB) (Bacillus subtilis (strain 168)).